The primary structure comprises 413 residues: Aspartate aminotransferase, cytoplasmic (413 aa).

The L-aspartate site is built by G39 and W141. S149 bears the Phosphoserine mark. N195 contributes to the L-aspartate binding site. K259 is modified (N6-(pyridoxal phosphate)lysine). R387 provides a ligand contact to L-aspartate.

This sequence belongs to the class-I pyridoxal-phosphate-dependent aminotransferase family. In terms of assembly, homodimer. Pyridoxal 5'-phosphate serves as cofactor.

It is found in the cytoplasm. The catalysed reaction is L-aspartate + 2-oxoglutarate = oxaloacetate + L-glutamate. The enzyme catalyses L-cysteine + 2-oxoglutarate = 2-oxo-3-sulfanylpropanoate + L-glutamate. It carries out the reaction (2S)-2-aminobutanoate + 2-oxoglutarate = 2-oxobutanoate + L-glutamate. It catalyses the reaction 3-sulfino-L-alanine + 2-oxoglutarate = 3-sulfinopyruvate + L-glutamate. In terms of biological role, biosynthesis of L-glutamate from L-aspartate or L-cysteine. Important regulator of levels of glutamate, the major excitatory neurotransmitter of the vertebrate central nervous system. Acts as a scavenger of glutamate in brain neuroprotection. The aspartate aminotransferase activity is involved in hepatic glucose synthesis during development and in adipocyte glyceroneogenesis. Using L-cysteine as substrate, regulates levels of mercaptopyruvate, an important source of hydrogen sulfide. Mercaptopyruvate is converted into H(2)S via the action of 3-mercaptopyruvate sulfurtransferase (3MST). Hydrogen sulfide is an important synaptic modulator and neuroprotectant in the brain. In addition, catalyzes (2S)-2-aminobutanoate, a by-product in the cysteine biosynthesis pathway. The protein is Aspartate aminotransferase, cytoplasmic of Homo sapiens (Human).